Consider the following 258-residue polypeptide: Regulatory protein RecX (258 aa).

This sequence belongs to the RecX family.

It localises to the cytoplasm. Functionally, modulates RecA activity. The polypeptide is Regulatory protein RecX (Streptococcus gordonii (strain Challis / ATCC 35105 / BCRC 15272 / CH1 / DL1 / V288)).